The chain runs to 73 residues: Translation initiation factor IF-1 2 (73 aa).

Residues 1-72 (MAKEELVEFG…TKGRINYRHK (72 aa)) enclose the S1-like domain.

It belongs to the IF-1 family. Component of the 30S ribosomal translation pre-initiation complex which assembles on the 30S ribosome in the order IF-2 and IF-3, IF-1 and N-formylmethionyl-tRNA(fMet); mRNA recruitment can occur at any time during PIC assembly.

It localises to the cytoplasm. In terms of biological role, one of the essential components for the initiation of protein synthesis. Stabilizes the binding of IF-2 and IF-3 on the 30S subunit to which N-formylmethionyl-tRNA(fMet) subsequently binds. Helps modulate mRNA selection, yielding the 30S pre-initiation complex (PIC). Upon addition of the 50S ribosomal subunit IF-1, IF-2 and IF-3 are released leaving the mature 70S translation initiation complex. The protein is Translation initiation factor IF-1 2 of Cupriavidus pinatubonensis (strain JMP 134 / LMG 1197) (Cupriavidus necator (strain JMP 134)).